Reading from the N-terminus, the 721-residue chain is Dipeptidyl-peptidase 5 (721 aa).

The signal sequence occupies residues Met-1 to Ala-18. N-linked (GlcNAc...) asparagine glycosylation is found at Asn-75, Asn-94, Asn-151, and Asn-254. The interval Ala-271–Pro-297 is disordered. Asn-380 and Asn-450 each carry an N-linked (GlcNAc...) asparagine glycan. Catalysis depends on Ser-560, which acts as the Charge relay system. The N-linked (GlcNAc...) asparagine glycan is linked to Asn-607. Residues Asp-643 and His-675 each act as charge relay system in the active site.

It belongs to the peptidase S9C family. In terms of processing, N-glycosylated. In terms of tissue distribution, expressed in mycelia and conidia.

The protein resides in the secreted. Its function is as follows. May be involved in metabolism of dipeptides or may affect host defense mechanisms. Has a substrate specificity limited to the hydrolysis of X-Ala, His-Ser, and Ser-Tyr dipeptides at a neutral pH optimum. This is Dipeptidyl-peptidase 5 from Aspergillus fumigatus (strain ATCC MYA-4609 / CBS 101355 / FGSC A1100 / Af293) (Neosartorya fumigata).